The sequence spans 262 residues: Ribosomal RNA small subunit methyltransferase A (262 aa).

Residues Asn14, Leu16, Gly41, Glu62, Asp87, and Asn109 each coordinate S-adenosyl-L-methionine.

Belongs to the class I-like SAM-binding methyltransferase superfamily. rRNA adenine N(6)-methyltransferase family. RsmA subfamily.

The protein resides in the cytoplasm. The catalysed reaction is adenosine(1518)/adenosine(1519) in 16S rRNA + 4 S-adenosyl-L-methionine = N(6)-dimethyladenosine(1518)/N(6)-dimethyladenosine(1519) in 16S rRNA + 4 S-adenosyl-L-homocysteine + 4 H(+). Its function is as follows. Specifically dimethylates two adjacent adenosines (A1518 and A1519) in the loop of a conserved hairpin near the 3'-end of 16S rRNA in the 30S particle. May play a critical role in biogenesis of 30S subunits. In Francisella tularensis subsp. holarctica (strain FTNF002-00 / FTA), this protein is Ribosomal RNA small subunit methyltransferase A.